A 497-amino-acid polypeptide reads, in one-letter code: MATQEAGKLEWRISVDNGTTERLVPRSGLSKRIFLWLKDLVMKVIMERVAKFMRKAWRIGADDPAKVVHCLKVGLALSLVSIFYYMRPLYDGVGGNAMWAIMTVVVVFESNVGATFCKCVNRVVATILAGSLGIAVHWVATQSGKAEVFVIGCSVFLFAFAATYSRFVPSFKARFDYGAMIFILTFSLVSVGGYRVDKLVELAQQRVSTIAIGTSICIIITVFFCPIWAGSQLHRLIERNLEKLADSLDGCVAEYFKENEVSTNRNEDENTNMKLQGFKCVLNSKGTEEAMPLIRFSGFSFSQANLARWEPAHGSFNFRHPWKLYVKIGAAMRRCAYCLENLSICINYETEAPDQVKNHFGEACMKLSSASSKILRELADMMKNTRKSSKMDFLVFDMNSAVQELQETLKNVPIETNKPEEVPSEEENKVDSEERTTSMSLHEVLPVATLVSLLIENAARIQTAVEAVDELANLADFEQDSKKKTGDNNTKQPPLSS.

A run of 6 helical transmembrane segments spans residues 66 to 86 (KVVHCLKVGLALSLVSIFYYM), 88 to 108 (PLYDGVGGNAMWAIMTVVVVF), 123 to 143 (VVATILAGSLGIAVHWVATQS), 148 to 168 (VFVIGCSVFLFAFAATYSRFV), 173 to 193 (ARFDYGAMIFILTFSLVSVGG), and 210 to 230 (IAIGTSICIIITVFFCPIWAG). 2 disordered regions span residues 413–437 (PIETNKPEEVPSEEENKVDSEERTT) and 476–497 (DFEQDSKKKTGDNNTKQPPLSS). Over residues 417–436 (NKPEEVPSEEENKVDSEERT) the composition is skewed to basic and acidic residues. The span at 487 to 497 (DNNTKQPPLSS) shows a compositional bias: polar residues.

It belongs to the aromatic acid exporter (TC 2.A.85) family.

Its subcellular location is the membrane. Its function is as follows. Malate transporter. This chain is Aluminum-activated malate transporter 10 (ALMT10), found in Arabidopsis thaliana (Mouse-ear cress).